We begin with the raw amino-acid sequence, 469 residues long: A-type ATP synthase subunit B 3 (469 aa).

It belongs to the ATPase alpha/beta chains family. Has multiple subunits with at least A(3), B(3), C, D, E, F, H, I and proteolipid K(x).

It is found in the cell membrane. Component of the A-type ATP synthase that produces ATP from ADP in the presence of a proton gradient across the membrane. The B chain is a regulatory subunit. The polypeptide is A-type ATP synthase subunit B 3 (Methanospirillum hungatei JF-1 (strain ATCC 27890 / DSM 864 / NBRC 100397 / JF-1)).